The sequence spans 63 residues: Small ribosomal subunit protein bS21 (63 aa).

Belongs to the bacterial ribosomal protein bS21 family.

The sequence is that of Small ribosomal subunit protein bS21 from Bacteroides fragilis (strain ATCC 25285 / DSM 2151 / CCUG 4856 / JCM 11019 / LMG 10263 / NCTC 9343 / Onslow / VPI 2553 / EN-2).